Consider the following 469-residue polypeptide: tRNA-2-methylthio-N(6)-dimethylallyladenosine synthase (469 aa).

The region spanning 22–142 is the MTTase N-terminal domain; sequence RKVFIKTYGC…LPEALRRAKE (121 aa). The [4Fe-4S] cluster site is built by cysteine 31, cysteine 67, cysteine 105, cysteine 183, cysteine 187, and cysteine 190. Positions 169–401 constitute a Radical SAM core domain; the sequence is RARGVTAFLT…QALLLKQQQE (233 aa). In terms of domain architecture, TRAM spans 404 to 466; sequence ESCIGKEIDL…TNSLFAERAE (63 aa).

This sequence belongs to the methylthiotransferase family. MiaB subfamily. Monomer. It depends on [4Fe-4S] cluster as a cofactor.

The protein resides in the cytoplasm. It catalyses the reaction N(6)-dimethylallyladenosine(37) in tRNA + (sulfur carrier)-SH + AH2 + 2 S-adenosyl-L-methionine = 2-methylsulfanyl-N(6)-dimethylallyladenosine(37) in tRNA + (sulfur carrier)-H + 5'-deoxyadenosine + L-methionine + A + S-adenosyl-L-homocysteine + 2 H(+). Functionally, catalyzes the methylthiolation of N6-(dimethylallyl)adenosine (i(6)A), leading to the formation of 2-methylthio-N6-(dimethylallyl)adenosine (ms(2)i(6)A) at position 37 in tRNAs that read codons beginning with uridine. The sequence is that of tRNA-2-methylthio-N(6)-dimethylallyladenosine synthase from Rhizobium etli (strain ATCC 51251 / DSM 11541 / JCM 21823 / NBRC 15573 / CFN 42).